We begin with the raw amino-acid sequence, 138 residues long: ATP synthase epsilon chain (138 aa).

The protein belongs to the ATPase epsilon chain family. As to quaternary structure, F-type ATPases have 2 components, CF(1) - the catalytic core - and CF(0) - the membrane proton channel. CF(1) has five subunits: alpha(3), beta(3), gamma(1), delta(1), epsilon(1). CF(0) has three main subunits: a, b and c.

The protein resides in the cell inner membrane. Functionally, produces ATP from ADP in the presence of a proton gradient across the membrane. This is ATP synthase epsilon chain from Verminephrobacter eiseniae (strain EF01-2).